Reading from the N-terminus, the 506-residue chain is Galactose/methyl galactoside import ATP-binding protein MglA (506 aa).

ABC transporter domains follow at residues 14 to 249 (LEMS…VGRS) and 264 to 506 (VILE…SLHL). ATP is bound at residue 46 to 53 (GENGAGKS).

Belongs to the ABC transporter superfamily. Galactose/methyl galactoside importer (TC 3.A.1.2.3) family. In terms of assembly, the complex is composed of one ATP-binding protein (MglA), two transmembrane proteins (MglC) and a solute-binding protein (MglB).

The protein resides in the cell inner membrane. It carries out the reaction D-galactose(out) + ATP + H2O = D-galactose(in) + ADP + phosphate + H(+). The enzyme catalyses methyl beta-D-galactoside(out) + ATP + H2O = methyl beta-D-galactoside(in) + ADP + phosphate + H(+). Part of the ABC transporter complex MglABC involved in galactose/methyl galactoside import. Responsible for energy coupling to the transport system. The chain is Galactose/methyl galactoside import ATP-binding protein MglA from Yersinia pestis bv. Antiqua (strain Antiqua).